Here is a 447-residue protein sequence, read N- to C-terminus: Dual specificity protein phosphatase CDC14C (447 aa).

The interval 14–168 is a; it reads PQDDVYVDIT…AMQYGFLNFN (155 aa). The linker stretch occupies residues 169 to 182; sequence SFNLDEYEHYEKAE. Residues 183-349 are b; that stretch reads NGDLNWIIPD…EGDYFRQRLK (167 aa). The Tyrosine-protein phosphatase domain maps to 184–344; it reads GDLNWIIPDR…TSLWLEGDYF (161 aa). The active-site Phosphocysteine intermediate is cysteine 284. Residues 426 to 446 form a helical membrane-spanning segment; it reads FTLCSVVIWWIVCDYILPILL.

Belongs to the protein-tyrosine phosphatase family. Non-receptor class CDC14 subfamily.

It is found in the endoplasmic reticulum membrane. It catalyses the reaction O-phospho-L-tyrosyl-[protein] + H2O = L-tyrosyl-[protein] + phosphate. It carries out the reaction O-phospho-L-seryl-[protein] + H2O = L-seryl-[protein] + phosphate. The enzyme catalyses O-phospho-L-threonyl-[protein] + H2O = L-threonyl-[protein] + phosphate. Functionally, dual-specificity phosphatase. Preferentially dephosphorylates proteins modified by proline-directed kinases. The polypeptide is Dual specificity protein phosphatase CDC14C (Homo sapiens (Human)).